The following is an 875-amino-acid chain: Pyrogallol hydroxytransferase large subunit (875 aa).

The interval 82 to 104 (RKSFDPNGERNPQLRGAGLSKQD) is disordered. Serine 175 lines the Mo-bis(molybdopterin guanine dinucleotide) pocket.

The protein belongs to the prokaryotic molybdopterin-containing oxidoreductase family. Heterodimer of a large and a small subunit. Requires Mo-bis(molybdopterin guanine dinucleotide) as cofactor.

It carries out the reaction 1,2,3,5-tetrahydroxybenzene + 1,2,3-trihydroxybenzene = 1,2,3,5-tetrahydroxybenzene + 1,3,5-trihydroxybenzene. Its function is as follows. Isomerization of pyrogallol to phloroglucin. In Pelobacter acidigallici, this protein is Pyrogallol hydroxytransferase large subunit (athL).